We begin with the raw amino-acid sequence, 172 residues long: Large ribosomal subunit protein uL10 (172 aa).

Belongs to the universal ribosomal protein uL10 family. In terms of assembly, part of the ribosomal stalk of the 50S ribosomal subunit. The N-terminus interacts with L11 and the large rRNA to form the base of the stalk. The C-terminus forms an elongated spine to which L12 dimers bind in a sequential fashion forming a multimeric L10(L12)X complex.

In terms of biological role, forms part of the ribosomal stalk, playing a central role in the interaction of the ribosome with GTP-bound translation factors. The sequence is that of Large ribosomal subunit protein uL10 from Chlorobium limicola (strain DSM 245 / NBRC 103803 / 6330).